The sequence spans 136 residues: Large ribosomal subunit protein uL16 (136 aa).

This sequence belongs to the universal ribosomal protein uL16 family. As to quaternary structure, part of the 50S ribosomal subunit.

Binds 23S rRNA and is also seen to make contacts with the A and possibly P site tRNAs. The protein is Large ribosomal subunit protein uL16 of Rickettsia prowazekii (strain Madrid E).